Reading from the N-terminus, the 239-residue chain is Outer membrane protein PagN (239 aa).

The N-terminal stretch at M1–A22 is a signal peptide. Over K23–I26 the chain is Periplasmic. A beta stranded transmembrane segment spans residues Y27–V36. Residues V37–V65 lie on the Extracellular side of the membrane. Residues F66–F76 form a beta stranded membrane-spanning segment. Topologically, residues Y77 to Q81 are periplasmic. A beta stranded transmembrane segment spans residues L82–F92. At R93–R120 the chain is on the extracellular side. A beta stranded membrane pass occupies residues M121–F132. Topologically, residues H133–A137 are periplasmic. The chain crosses the membrane as a beta stranded span at residues F138–L148. At A149 to N174 the chain is on the extracellular side. The beta stranded transmembrane segment at F175 to Y185 threads the bilayer. Topologically, residues A186–N190 are periplasmic. A beta stranded transmembrane segment spans residues I191–I200. Over N201–D230 the chain is Extracellular. The chain crosses the membrane as a beta stranded span at residues F231–F239.

It is found in the cell outer membrane. In terms of biological role, haemagglutinin that facilitates the adhesion to and invasion of epithelial mammalian cells. Utilizes heparinated proteoglycan as a receptor to successfully invade host cells. This Salmonella typhimurium (strain LT2 / SGSC1412 / ATCC 700720) protein is Outer membrane protein PagN (pagN).